Here is a 472-residue protein sequence, read N- to C-terminus: MSSGTLYDKVWDLHRVADLPGGSTQLFVGLHLIHEVTSPQAFSGLRDKGLKVACPERTVATVDHIVPTTSQARPFADPLAEEMLSTLERNCAESGIVLNGIGSGRQGIVHVIAPELGLSQPGMTVACGDSHTSTHGAFGAIAFGIGTSQVRDVLASQSLAMNKLKVRRILVNGQLSAGVSAKDLVLHVIRTLGVKGGVGYAYEFAGSAIEALSMEERMTLCNMAIEGGARCGYVNPDQTTFDYLKGRPHAPSGAAWDAAVDWWLSLATDAAAEVDDEVVFDATVIAPTVTWGITPGQGLGIDECVPSLSMLDPGERPIAKEAYRYMDLDPGTPIAGVPIDVCFIGSCTNGRLSDLRAAAAVARGRQVAKGVKAFVVPGSEQVARAAEAEGLDQVFSEAGFEWREPGCSMCLAMNPDRLEGRQISASSSNRNFKGRQGSASGRTLLMSPAMVVAAAVHGRVTDVRTLALHSAS.

Residues cysteine 347, cysteine 407, and cysteine 410 each contribute to the [4Fe-4S] cluster site.

It belongs to the aconitase/IPM isomerase family. LeuC type 1 subfamily. In terms of assembly, heterodimer of LeuC and LeuD. The cofactor is [4Fe-4S] cluster.

It carries out the reaction (2R,3S)-3-isopropylmalate = (2S)-2-isopropylmalate. Its pathway is amino-acid biosynthesis; L-leucine biosynthesis; L-leucine from 3-methyl-2-oxobutanoate: step 2/4. In terms of biological role, catalyzes the isomerization between 2-isopropylmalate and 3-isopropylmalate, via the formation of 2-isopropylmaleate. In Synechococcus sp. (strain CC9902), this protein is 3-isopropylmalate dehydratase large subunit.